A 173-amino-acid chain; its full sequence is 6,7-dimethyl-8-ribityllumazine synthase (173 aa).

5-amino-6-(D-ribitylamino)uracil is bound by residues tyrosine 34, 65 to 67 (ALE), and 94 to 96 (CVI). 99 to 100 (ET) provides a ligand contact to (2S)-2-hydroxy-3-oxobutyl phosphate. The active-site Proton donor is the histidine 102. Asparagine 127 is a 5-amino-6-(D-ribitylamino)uracil binding site. Arginine 141 is a binding site for (2S)-2-hydroxy-3-oxobutyl phosphate.

It belongs to the DMRL synthase family.

The catalysed reaction is (2S)-2-hydroxy-3-oxobutyl phosphate + 5-amino-6-(D-ribitylamino)uracil = 6,7-dimethyl-8-(1-D-ribityl)lumazine + phosphate + 2 H2O + H(+). It participates in cofactor biosynthesis; riboflavin biosynthesis; riboflavin from 2-hydroxy-3-oxobutyl phosphate and 5-amino-6-(D-ribitylamino)uracil: step 1/2. Its function is as follows. Catalyzes the formation of 6,7-dimethyl-8-ribityllumazine by condensation of 5-amino-6-(D-ribitylamino)uracil with 3,4-dihydroxy-2-butanone 4-phosphate. This is the penultimate step in the biosynthesis of riboflavin. In Methylorubrum extorquens (strain CM4 / NCIMB 13688) (Methylobacterium extorquens), this protein is 6,7-dimethyl-8-ribityllumazine synthase.